A 337-amino-acid chain; its full sequence is Casein kinase II subunit alpha (337 aa).

One can recognise a Protein kinase domain in the interval 47 to 332 (YEIIRKIGRG…TREAMEHPYF (286 aa)). Residues 53–61 (IGRGKYSEV) and K76 each bind ATP. The active-site Proton acceptor is D164.

This sequence belongs to the protein kinase superfamily. CMGC Ser/Thr protein kinase family. CK2 subfamily. As to quaternary structure, tetramer of two alpha and two beta chains.

The catalysed reaction is L-seryl-[protein] + ATP = O-phospho-L-seryl-[protein] + ADP + H(+). It carries out the reaction L-threonyl-[protein] + ATP = O-phospho-L-threonyl-[protein] + ADP + H(+). Casein kinases are operationally defined by their preferential utilization of acidic proteins such as caseins as substrates. The alpha chain contains the catalytic site. In Dictyostelium discoideum (Social amoeba), this protein is Casein kinase II subunit alpha (casK).